The sequence spans 555 residues: Oxygen-dependent choline dehydrogenase (555 aa).

FAD is bound at residue 4 to 33; sequence DYIIIGAGSAGNVLATRLTEDPDVTVLLLE. His-473 serves as the catalytic Proton acceptor.

Belongs to the GMC oxidoreductase family. Requires FAD as cofactor.

The catalysed reaction is choline + A = betaine aldehyde + AH2. It catalyses the reaction betaine aldehyde + NAD(+) + H2O = glycine betaine + NADH + 2 H(+). It functions in the pathway amine and polyamine biosynthesis; betaine biosynthesis via choline pathway; betaine aldehyde from choline (cytochrome c reductase route): step 1/1. In terms of biological role, involved in the biosynthesis of the osmoprotectant glycine betaine. Catalyzes the oxidation of choline to betaine aldehyde and betaine aldehyde to glycine betaine at the same rate. This chain is Oxygen-dependent choline dehydrogenase, found in Proteus mirabilis (strain HI4320).